The primary structure comprises 200 residues: Dephospho-CoA kinase (200 aa).

Positions 4–200 constitute a DPCK domain; sequence TIGLTGSVAT…TFIKRFVKNK (197 aa). 12-17 contributes to the ATP binding site; sequence ATGKST.

Belongs to the CoaE family.

The protein resides in the cytoplasm. The catalysed reaction is 3'-dephospho-CoA + ATP = ADP + CoA + H(+). It participates in cofactor biosynthesis; coenzyme A biosynthesis; CoA from (R)-pantothenate: step 5/5. Functionally, catalyzes the phosphorylation of the 3'-hydroxyl group of dephosphocoenzyme A to form coenzyme A. This is Dephospho-CoA kinase from Listeria monocytogenes serotype 4b (strain F2365).